The following is a 264-amino-acid chain: MRTYLDLLQHVLDHGVDRDDRTGTGTRSVFGYQMRFDLEEGFPVLTTKKLHLRSIIHELLWFLKGDTNIAYLKENGVTIWDEWADENGDLGPVYGYQWRSWPAPDGRHIDQIANLLKMLHTNPQSRRLIVSAWNPALVDEMALPPCHCLFQFYVANGRLSCQLYQRSADIFLGVPFNIASYALLTMMIAQVTGLKPGEFIHTLGDAHIYSNHFEQARLQLTRTPKKLPVMHINPDVKDLFAFRFEDFRLDGYEADPTIKAPIAV.

R21 provides a ligand contact to dUMP. H51 contributes to the (6R)-5,10-methylene-5,6,7,8-tetrahydrofolate binding site. Position 126-127 (126-127 (RR)) interacts with dUMP. C146 serves as the catalytic Nucleophile. DUMP-binding positions include 166 to 169 (RSAD), N177, and 207 to 209 (HIY). D169 serves as a coordination point for (6R)-5,10-methylene-5,6,7,8-tetrahydrofolate. A (6R)-5,10-methylene-5,6,7,8-tetrahydrofolate-binding site is contributed by A263.

This sequence belongs to the thymidylate synthase family. Bacterial-type ThyA subfamily. In terms of assembly, homodimer.

The protein resides in the cytoplasm. It catalyses the reaction dUMP + (6R)-5,10-methylene-5,6,7,8-tetrahydrofolate = 7,8-dihydrofolate + dTMP. Its pathway is pyrimidine metabolism; dTTP biosynthesis. In terms of biological role, catalyzes the reductive methylation of 2'-deoxyuridine-5'-monophosphate (dUMP) to 2'-deoxythymidine-5'-monophosphate (dTMP) while utilizing 5,10-methylenetetrahydrofolate (mTHF) as the methyl donor and reductant in the reaction, yielding dihydrofolate (DHF) as a by-product. This enzymatic reaction provides an intracellular de novo source of dTMP, an essential precursor for DNA biosynthesis. The protein is Thymidylate synthase of Brucella abortus (strain 2308).